The primary structure comprises 208 residues: Coiled-coil domain-containing protein 25 (208 aa).

Over 1–105 (MVFYFTSSSV…SNLKKTADMD (105 aa)) the chain is Extracellular. A DNA-binding region spans residues 21 to 25 (KDKYE). N6-acetyllysine is present on Lys23. The chain crosses the membrane as a helical span at residues 106 to 122 (VGQIGFHRQKDVKIVTV). Residues 117–187 (VKIVTVEKKV…REMDELRSYS (71 aa)) adopt a coiled-coil conformation. At 123–208 (EKKVNEILNR…QDGNDSDEFM (86 aa)) the chain is on the cytoplasmic side. Residues 144–184 (LAAEKEGRDREERNEKKAQIQEMKRKEKEEMKKKREMDELR) are compositionally biased toward basic and acidic residues. The interval 144–208 (LAAEKEGRDR…QDGNDSDEFM (65 aa)) is disordered. At Ser204 the chain carries Phosphoserine.

This sequence belongs to the CCDC25 family. Interacts (via cytoplasmic region) with ILK.

The protein localises to the cell membrane. It is found in the endomembrane system. Its function is as follows. Transmembrane receptor that senses neutrophil extracellular traps (NETs) and triggers the ILK-PARVB pathway to enhance cell motility. NETs are mainly composed of DNA fibers and are released by neutrophils to bind pathogens during inflammation. Formation of NETs is also associated with cancer metastasis, NET-DNA acting as a chemotactic factor to attract cancer cells. Specifically binds NETs on its extracellular region, in particular the 8-OHdG-enriched DNA present in NETs, and recruits ILK, initiating the ILK-PARVB cascade to induce cytoskeleton rearrangement and directional migration of cells. In the context of cancer, promotes cancer metastasis by sensing NETs and promoting migration of tumor cells. The chain is Coiled-coil domain-containing protein 25 from Mus musculus (Mouse).